A 61-amino-acid polypeptide reads, in one-letter code: Insect toxin AaHIT5 (61 aa).

An LCN-type CS-alpha/beta domain is found at 1 to 61; it reads DGYIKRHDGC…AWKSETNTCD (61 aa). Cystine bridges form between Cys-10-Cys-60, Cys-14-Cys-35, Cys-21-Cys-42, and Cys-25-Cys-44.

In terms of tissue distribution, expressed by the venom gland.

The protein resides in the secreted. In terms of biological role, excitatory insect toxins induce a spastic paralysis. They bind voltage-independently to sodium channels (Nav) and shift the voltage of activation toward more negative potentials thereby affecting sodium channel activation and promoting spontaneous and repetitive firing. This toxin elicits excitatory activity with no flaccid paralysis despite its high degree of sequence similarity with other depressant insect toxins. This toxin is active only on insects. This is Insect toxin AaHIT5 from Androctonus australis (Sahara scorpion).